A 179-amino-acid polypeptide reads, in one-letter code: Large ribosomal subunit protein uL6 (179 aa).

Belongs to the universal ribosomal protein uL6 family. As to quaternary structure, part of the 50S ribosomal subunit.

Functionally, this protein binds to the 23S rRNA, and is important in its secondary structure. It is located near the subunit interface in the base of the L7/L12 stalk, and near the tRNA binding site of the peptidyltransferase center. The chain is Large ribosomal subunit protein uL6 from Spiroplasma citri.